The sequence spans 102 residues: Virulence plasmid protein pGP4-D (102 aa).

The polypeptide is Virulence plasmid protein pGP4-D (Chlamydia trachomatis serovar L2 (strain ATCC VR-902B / DSM 19102 / 434/Bu)).